A 269-amino-acid chain; its full sequence is Large ribosomal subunit protein uL3m (269 aa).

A mitochondrion-targeting transit peptide spans 1–19 (MSKFLQGSIFSISKLHVRY).

Belongs to the universal ribosomal protein uL3 family. Component of the mitochondrial large ribosomal subunit (mt-LSU). Mature yeast 74S mitochondrial ribosomes consist of a small (37S) and a large (54S) subunit. The 37S small subunit contains a 15S ribosomal RNA (15S mt-rRNA) and 34 different proteins. The 54S large subunit contains a 21S rRNA (21S mt-rRNA) and 46 different proteins.

It is found in the mitochondrion. In terms of biological role, component of the mitochondrial ribosome (mitoribosome), a dedicated translation machinery responsible for the synthesis of mitochondrial genome-encoded proteins, including at least some of the essential transmembrane subunits of the mitochondrial respiratory chain. The mitoribosomes are attached to the mitochondrial inner membrane and translation products are cotranslationally integrated into the membrane. The polypeptide is Large ribosomal subunit protein uL3m (MRPL9) (Saccharomyces cerevisiae (strain ATCC 204508 / S288c) (Baker's yeast)).